We begin with the raw amino-acid sequence, 924 residues long: Bifunctional glutamine synthetase adenylyltransferase/adenylyl-removing enzyme (924 aa).

Positions methionine 1 to valine 422 are adenylyl removase. Residues serine 424–glutamate 924 are adenylyl transferase.

This sequence belongs to the GlnE family. Mg(2+) serves as cofactor.

The catalysed reaction is [glutamine synthetase]-O(4)-(5'-adenylyl)-L-tyrosine + phosphate = [glutamine synthetase]-L-tyrosine + ADP. It catalyses the reaction [glutamine synthetase]-L-tyrosine + ATP = [glutamine synthetase]-O(4)-(5'-adenylyl)-L-tyrosine + diphosphate. In terms of biological role, involved in the regulation of glutamine synthetase GlnA, a key enzyme in the process to assimilate ammonia. When cellular nitrogen levels are high, the C-terminal adenylyl transferase (AT) inactivates GlnA by covalent transfer of an adenylyl group from ATP to specific tyrosine residue of GlnA, thus reducing its activity. Conversely, when nitrogen levels are low, the N-terminal adenylyl removase (AR) activates GlnA by removing the adenylyl group by phosphorolysis, increasing its activity. The regulatory region of GlnE binds the signal transduction protein PII (GlnB) which indicates the nitrogen status of the cell. The chain is Bifunctional glutamine synthetase adenylyltransferase/adenylyl-removing enzyme from Acinetobacter baylyi (strain ATCC 33305 / BD413 / ADP1).